The primary structure comprises 208 residues: Thymidylate kinase (208 aa).

Position 10 to 17 (10 to 17 (GLEGAGKS)) interacts with ATP.

The protein belongs to the thymidylate kinase family.

The enzyme catalyses dTMP + ATP = dTDP + ADP. In terms of biological role, phosphorylation of dTMP to form dTDP in both de novo and salvage pathways of dTTP synthesis. This is Thymidylate kinase from Pseudoalteromonas translucida (strain TAC 125).